Consider the following 279-residue polypeptide: Shikimate dehydrogenase (NADP(+)) (279 aa).

Residues 17 to 19 and T64 each bind shikimate; that span reads SLS. K68 acts as the Proton acceptor in catalysis. D80 is a binding site for NADP(+). Positions 89 and 105 each coordinate shikimate. NADP(+) contacts are provided by residues 129-133, 153-158, and L221; these read GAGGS and NRTAKK. Y223 provides a ligand contact to shikimate. G245 serves as a coordination point for NADP(+).

Belongs to the shikimate dehydrogenase family. Homodimer.

It carries out the reaction shikimate + NADP(+) = 3-dehydroshikimate + NADPH + H(+). The protein operates within metabolic intermediate biosynthesis; chorismate biosynthesis; chorismate from D-erythrose 4-phosphate and phosphoenolpyruvate: step 4/7. Functionally, involved in the biosynthesis of the chorismate, which leads to the biosynthesis of aromatic amino acids. Catalyzes the reversible NADPH linked reduction of 3-dehydroshikimate (DHSA) to yield shikimate (SA). The sequence is that of Shikimate dehydrogenase (NADP(+)) from Idiomarina loihiensis (strain ATCC BAA-735 / DSM 15497 / L2-TR).